A 504-amino-acid polypeptide reads, in one-letter code: Glutamate--tRNA ligase (504 aa).

The 'HIGH' region signature appears at 12-22 (PSPTGALHIGG). A 'KMSKS' region motif is present at residues 260–264 (KLSKR). Lys263 provides a ligand contact to ATP.

It belongs to the class-I aminoacyl-tRNA synthetase family. Glutamate--tRNA ligase type 1 subfamily. As to quaternary structure, monomer.

It is found in the cytoplasm. The enzyme catalyses tRNA(Glu) + L-glutamate + ATP = L-glutamyl-tRNA(Glu) + AMP + diphosphate. Catalyzes the attachment of glutamate to tRNA(Glu) in a two-step reaction: glutamate is first activated by ATP to form Glu-AMP and then transferred to the acceptor end of tRNA(Glu). The protein is Glutamate--tRNA ligase of Bacteroides thetaiotaomicron (strain ATCC 29148 / DSM 2079 / JCM 5827 / CCUG 10774 / NCTC 10582 / VPI-5482 / E50).